The following is a 400-amino-acid chain: Protein screw (400 aa).

A signal peptide spans 1–16 (MLNVFFLTSLFYAASA). The propeptide occupies 17–277 (TTYVTTNNHI…RFKRDLEKRR (261 aa)). Residues Asn-165, Asn-189, Asn-201, Asn-304, and Asn-342 are each glycosylated (N-linked (GlcNAc...) asparagine). 3 disulfide bridges follow: Cys-300–Cys-365, Cys-329–Cys-397, and Cys-333–Cys-399.

The protein belongs to the TGF-beta family. Heterodimers of scw/dpp are the active subunit, dpp/dpp homodimers elicit a basal response and scw/scw homodimers alone are ineffective in specifying a dorsal pattern. In terms of tissue distribution, ubiquitously expressed during early stages of embryogenesis, but the effect on development appears graded and is restricted to the dorsal side of the embryo.

It localises to the secreted. Part of the signal that specifies dorsal cell fates in the embryo. Acts together with dpp. In Drosophila melanogaster (Fruit fly), this protein is Protein screw (scw).